Consider the following 474-residue polypeptide: Coronin-1C (474 aa).

WD repeat units lie at residues 78–118 (GHTG…LTLS), 128–168 (GHSK…ALIN), 172–202 (MHSDMIYNVSWSRNGSLICTASKDKKVRVID), 215–249 (AHEGARPMRAIFLADGNVFTTGFSRMSERQLALWN), and 263–303 (DTSN…PYVH). Residues 435 to 474 (VQNEAKLDEILKEIKSIKETICSQDERISKLEQQLAKMAA) are a coiled coil. An N6-acetyllysine modification is found at lysine 446.

The protein belongs to the WD repeat coronin family. Homotrimer. Binds F-actin. Interacts with RCC2. Interacts preferentially with nucleotide-free and GDP-bound RAC1. Interacts with VIM (via head domain). Interacts with MICAL2; this interaction recruits MICAL2 to the actin filaments. Detected in skeletal muscle (at protein level). Detected in fibroblasts (at protein level). Ubiquitous.

It localises to the cell membrane. Its subcellular location is the cell projection. The protein resides in the lamellipodium. It is found in the ruffle membrane. The protein localises to the cytoplasm. It localises to the cytoskeleton. Its subcellular location is the cell cortex. The protein resides in the endosome membrane. Its function is as follows. Plays a role in directed cell migration by regulating the activation and subcellular location of RAC1. Increases the presence of activated RAC1 at the leading edge of migrating cells. Required for normal organization of the cytoskeleton, including the actin cytoskeleton, microtubules and the vimentin intermediate filaments. Required for normal cell proliferation, cell migration, and normal formation of lamellipodia. Plays a role in endoplasmic reticulum-associated endosome fission: localizes to endosome membrane tubules and promotes recruitment of TMCC1, leading to recruitment of the endoplasmic reticulum to endosome tubules for fission. Endosome membrane fission of early and late endosomes is essential to separate regions destined for lysosomal degradation from carriers to be recycled to the plasma membrane. Required for normal distribution of mitochondria within cells. The sequence is that of Coronin-1C (Coro1c) from Mus musculus (Mouse).